Here is a 446-residue protein sequence, read N- to C-terminus: NADH oxidase (446 aa).

FAD is bound by residues 7 to 11, Glu-32, Cys-42, Val-79, 110 to 113, Lys-132, and Tyr-157; these read GCTHA and TTGS. Catalysis depends on His-10, which acts as the Proton acceptor. The active-site Redox-active is Cys-42. The residue at position 42 (Cys-42) is a Cysteine sulfinic acid (-SO2H). NAD(+) is bound by residues 150 to 165, Asp-177, Tyr-186, and Gly-243; that span reads VVVV…LVEA. FAD is bound by residues 271–281, Leu-298, Ala-299, and Thr-300; that span reads TSNPDIFAAGD. Gly-328 serves as a coordination point for NAD(+). Phe-424 contacts FAD.

It belongs to the class-III pyridine nucleotide-disulfide oxidoreductase family. Homodimer. The cofactor is FAD. The N-terminus is blocked.

The catalysed reaction is 2 NADH + O2 + 2 H(+) = 2 NAD(+) + 2 H2O. Its function is as follows. Catalyzes the four-electron reduction of molecular oxygen to water. The polypeptide is NADH oxidase (nox) (Enterococcus faecalis (strain ATCC 700802 / V583)).